Consider the following 332-residue polypeptide: Ornithine carbamoyltransferase 1, catabolic (332 aa).

Carbamoyl phosphate is bound by residues 56-59, Q83, R107, and 134-137; these read STRT and HPTQ. Residues N167, D231, and 235–236 each bind L-ornithine; that span reads SM. Residues 273–274 and R318 contribute to the carbamoyl phosphate site; that span reads CL.

This sequence belongs to the aspartate/ornithine carbamoyltransferase superfamily. OTCase family.

The protein resides in the cytoplasm. The enzyme catalyses carbamoyl phosphate + L-ornithine = L-citrulline + phosphate + H(+). The protein operates within amino-acid degradation; L-arginine degradation via ADI pathway; carbamoyl phosphate from L-arginine: step 2/2. Its function is as follows. Reversibly catalyzes the transfer of the carbamoyl group from carbamoyl phosphate (CP) to the N(epsilon) atom of ornithine (ORN) to produce L-citrulline. This Staphylococcus epidermidis (strain ATCC 12228 / FDA PCI 1200) protein is Ornithine carbamoyltransferase 1, catabolic (arcB1).